A 376-amino-acid polypeptide reads, in one-letter code: Cobalt-precorrin-5B C(1)-methyltransferase (376 aa).

The interval 353-376 (KGRTTSTPSHQPAPSSFGDRNRRT) is disordered. A compositionally biased stretch (polar residues) spans 355-366 (RTTSTPSHQPAP).

This sequence belongs to the CbiD family.

The catalysed reaction is Co-precorrin-5B + S-adenosyl-L-methionine = Co-precorrin-6A + S-adenosyl-L-homocysteine. It functions in the pathway cofactor biosynthesis; adenosylcobalamin biosynthesis; cob(II)yrinate a,c-diamide from sirohydrochlorin (anaerobic route): step 6/10. Catalyzes the methylation of C-1 in cobalt-precorrin-5B to form cobalt-precorrin-6A. This Agrobacterium fabrum (strain C58 / ATCC 33970) (Agrobacterium tumefaciens (strain C58)) protein is Cobalt-precorrin-5B C(1)-methyltransferase.